The sequence spans 619 residues: MFYHLIAPLKNKTPPLTYFSKERHLKGALVNIPLRNKTLLGVVLEEVSKPSFECLELEKTPYFLLPFQIELAIFIAQYYSANLSSVLSLFAPFKECDLVGLEKIEPTLNALSQTQTNALKELQKHPASLLFGDTGSGKTEIYMHAIAQTLEQKKSALLLVPEIALTPQMQQRLKKVFKENLGLWHSKLSQNQKKQFLEKLYSQEIKLVVGTRSALFLPLKELGLIIVDEEHDFSYKSQQSPMYNARDLCLYLSHKFPIQVILGSATPSLSSYQRFKDKALVRLKGRYTPTQKNIIFEKTERFITPKLLEALKQVIDKNEQAIIFVPTRANFKTLLCPNCYKSVQCPFCSVNMSLHLKTNKLMCHYCHFSSPIPKICNACQSEVLVGKRIGTMQVLKELESLLEGAKIAILDKDHTSTPKKLHNILNDFNAQKTNILIGTQMISKGHDYAKVSLAVVLGIDNIIKSNSYRALEEGVSLLYQIAGRSARQISGQVFIQSTETDLLENFLEDYEDFLQYELQERCELYPPFSRLCLLEFKHKNEEKAQQLSLEASQTLSLCLEKGVTLSNFKAPIEKIASSYRYLILLRSKNPLSLIKSVHAFLKTAPNIPCSVNMDPVDIF.

The Helicase ATP-binding domain maps to 119-285 (LKELQKHPAS…KDKALVRLKG (167 aa)). Residue 132–139 (GDTGSGKT) participates in ATP binding. A DEAH box motif is present at residues 228–231 (DEEH). Zn(2+) contacts are provided by Cys-336, Cys-339, Cys-345, Cys-348, Cys-363, Cys-366, Cys-376, and Cys-379. Residues 371-532 (PIPKICNACQ…ELYPPFSRLC (162 aa)) enclose the Helicase C-terminal domain.

The protein belongs to the helicase family. PriA subfamily. Component of the replication restart primosome. Zn(2+) is required as a cofactor.

It carries out the reaction Couples ATP hydrolysis with the unwinding of duplex DNA by translocating in the 3'-5' direction.. The enzyme catalyses ATP + H2O = ADP + phosphate + H(+). Initiates the restart of stalled replication forks, which reloads the replicative helicase on sites other than the origin of replication. Recognizes and binds to abandoned replication forks and remodels them to uncover a helicase loading site. Promotes assembly of the primosome at these replication forks. In Helicobacter pylori (strain J99 / ATCC 700824) (Campylobacter pylori J99), this protein is Replication restart protein PriA.